Here is a 258-residue protein sequence, read N- to C-terminus: Regulatory protein RecX (258 aa).

Belongs to the RecX family.

It is found in the cytoplasm. Functionally, modulates RecA activity. This chain is Regulatory protein RecX, found in Streptococcus pyogenes serotype M2 (strain MGAS10270).